Reading from the N-terminus, the 519-residue chain is Xylose import ATP-binding protein XylG (519 aa).

2 consecutive ABC transporter domains span residues 6 to 245 (LTMR…VGRE) and 262 to 507 (LDVR…LKPA). ATP is bound at residue 38–45 (GENGAGKS).

The protein belongs to the ABC transporter superfamily. Xylose importer (TC 3.A.1.2.4) family. The complex is composed of two ATP-binding proteins (XylG), two transmembrane proteins (XylH) and a solute-binding protein (XylF).

The protein localises to the cell inner membrane. The catalysed reaction is D-xylose(out) + ATP + H2O = D-xylose(in) + ADP + phosphate + H(+). Its function is as follows. Part of the ABC transporter complex XylFGH involved in xylose import. Responsible for energy coupling to the transport system. The sequence is that of Xylose import ATP-binding protein XylG from Burkholderia cenocepacia (strain HI2424).